A 215-amino-acid chain; its full sequence is MNCEVCQLKELEVESFEIREVLRCILHTIVFHRALGLIRPKDIDLELFEITYVQCGEIEVEKKIDEKIEQFINWIEKHPNKKSQICLSFYEVKSKQPSWFTKIERLYWEQWYINLNVLQPTKPPVGKSHHSKLVMDPGEASEERSSRRTLLEQSLQEVLFQIIKFVNEKKDHVPPINDGVIYYPFEITIPSSSDSAFGMDMFKRILHSGHPSMLG.

The tract at residues 124–147 (PVGKSHHSKLVMDPGEASEERSSR) is disordered.

This sequence belongs to the ATG101 family. In terms of assembly, interacts with ATG11 and ATG13A.

It is found in the cytoplasmic vesicle. It localises to the autophagosome. In terms of biological role, accessory protein involved in autophagy. Acts as a scaffold protein of the ATG1-ATG13 complex for faithful delivery of autophagic vesicles to the vacuole. Required for selective mitophagy. The polypeptide is Autophagy-related protein 101 (Arabidopsis thaliana (Mouse-ear cress)).